A 397-amino-acid chain; its full sequence is Digeranylgeranylglycerophospholipid reductase (397 aa).

FAD contacts are provided by Ala-15, Glu-34, Cys-45, Gly-46, Gly-48, Arg-101, Ala-125, Glu-163, Asp-284, Gly-296, and Ile-297. The a 2,3-bis-O-(geranylgeranyl)-sn-glycerol 1-phospholipid site is built by Lys-339 and Val-375.

The protein belongs to the geranylgeranyl reductase family. DGGGPL reductase subfamily. FAD serves as cofactor.

It carries out the reaction 2,3-bis-O-(phytanyl)-sn-glycerol 1-phosphate + 8 NADP(+) = 2,3-bis-O-(geranylgeranyl)-sn-glycerol 1-phosphate + 8 NADPH + 8 H(+). The catalysed reaction is 2,3-bis-O-(phytanyl)-sn-glycerol 1-phosphate + 8 NAD(+) = 2,3-bis-O-(geranylgeranyl)-sn-glycerol 1-phosphate + 8 NADH + 8 H(+). The enzyme catalyses a 2,3-bis-O-phytanyl-sn-glycerol 1-phospholipid + 8 A = a 2,3-bis-O-(geranylgeranyl)-sn-glycerol 1-phospholipid + 8 AH2. It catalyses the reaction CDP-2,3-bis-O-(geranylgeranyl)-sn-glycerol + 8 AH2 = CDP-2,3-bis-O-(phytanyl)-sn-glycerol + 8 A. It carries out the reaction archaetidylserine + 8 AH2 = 2,3-bis-O-phytanyl-sn-glycero-3-phospho-L-serine + 8 A. It functions in the pathway membrane lipid metabolism; glycerophospholipid metabolism. Its function is as follows. Is involved in the reduction of 2,3-digeranylgeranylglycerophospholipids (unsaturated archaeols) into 2,3-diphytanylglycerophospholipids (saturated archaeols) in the biosynthesis of archaeal membrane lipids. Catalyzes the formation of archaetidic acid (2,3-di-O-phytanyl-sn-glyceryl phosphate) from 2,3-di-O-geranylgeranylglyceryl phosphate (DGGGP) via the hydrogenation of each double bond of the isoprenoid chains. Is also probably able to reduce double bonds of geranyl groups in CDP-2,3-bis-O-(geranylgeranyl)-sn-glycerol and archaetidylserine, thus acting at various stages in the biosynthesis of archaeal membrane lipids. The sequence is that of Digeranylgeranylglycerophospholipid reductase from Picrophilus torridus (strain ATCC 700027 / DSM 9790 / JCM 10055 / NBRC 100828 / KAW 2/3).